Consider the following 190-residue polypeptide: Putative manganese efflux pump MntP (190 aa).

6 helical membrane passes run 5 to 25, 41 to 61, 64 to 84, 105 to 125, 127 to 147, and 169 to 189; these read ALLA…VATG, WHFG…GQGI, FVDA…GLKM, TSLI…GVTL, MLGL…LGLT, and ILGG…SGVF.

Belongs to the MntP (TC 9.B.29) family.

It localises to the cell inner membrane. Functionally, probably functions as a manganese efflux pump. The sequence is that of Putative manganese efflux pump MntP from Oleidesulfovibrio alaskensis (strain ATCC BAA-1058 / DSM 17464 / G20) (Desulfovibrio alaskensis).